The primary structure comprises 633 residues: Replication protein E1 (633 aa).

Residues 84 to 86 carry the Nuclear localization signal motif; the sequence is KRK. Residues Ser90, Ser94, and Ser108 each carry the phosphoserine; by host modification. Residues 107–116 carry the Nuclear export signal motif; that stretch reads LSPRLGAISL. A disordered region spans residues 148–168; that stretch reads NTEGTDETETDQVQTVSGETT. The span at 158–168 shows a compositional bias: polar residues; the sequence is DQVQTVSGETT. The interval 169–335 is DNA-binding region; sequence TDSLGRQQIT…QTVIEYSLAD (167 aa). Residues 434-584 enclose the SF3 helicase domain; the sequence is VDFISFMIAL…FPFDSNGNPV (151 aa). Residue 460–467 coordinates ATP; the sequence is GPPDTGKS. Lys541 is covalently cross-linked (Glycyl lysine isopeptide (Lys-Gly) (interchain with G-Cter in SUMO)). The disordered stretch occupies residues 609–633; it reads DNEEEENGDPSNTFRCVPGKASRPI.

This sequence belongs to the papillomaviridae E1 protein family. As to quaternary structure, can form hexamers. Interacts with E2 protein; this interaction increases E1 DNA binding specificity. Interacts with host DNA polymerase subunit POLA2. Interacts with host single stranded DNA-binding protein RPA1. Interacts with host TOP1; this interaction stimulates the enzymatic activity of TOP1. Post-translationally, phosphorylated. Sumoylated.

The protein localises to the host nucleus. It carries out the reaction Couples ATP hydrolysis with the unwinding of duplex DNA by translocating in the 3'-5' direction.. It catalyses the reaction ATP + H2O = ADP + phosphate + H(+). Functionally, ATP-dependent DNA 3'-5' helicase required for initiation of viral DNA replication. It forms a complex with the viral E2 protein. The E1-E2 complex binds to the replication origin which contains binding sites for both proteins. During the initial step, a dimer of E1 interacts with a dimer of protein E2 leading to a complex that binds the viral origin of replication with high specificity. Then, a second dimer of E1 displaces the E2 dimer in an ATP-dependent manner to form the E1 tetramer. Following this, two E1 monomers are added to each half of the site, which results in the formation of two E1 trimers on the viral ori. Subsequently, two hexamers will be created. The double hexamer acts as a bi-directional helicase machinery and unwinds the viral DNA and then recruits the host DNA polymerase to start replication. The sequence is that of Replication protein E1 from Homo sapiens (Human).